We begin with the raw amino-acid sequence, 861 residues long: Glucans biosynthesis glucosyltransferase H (861 aa).

A run of 6 helical transmembrane segments spans residues 142–162, 188–208, 516–536, 573–593, 600–620, and 683–703; these read FILLLLMLAQTSVATYYMKGI, VLPYVIQFGILALFAILFCWV, VFLTGVMSYLSAPLWFFFLVL, LFSTTLTLLFLPKLLSVMLIW, FGGVIRVTLSMLLEMFFSVLL, and FLWWLSPIVGSLILSIPVSVI.

Belongs to the glycosyltransferase 2 family. OpgH subfamily.

It is found in the cell inner membrane. It functions in the pathway glycan metabolism; osmoregulated periplasmic glucan (OPG) biosynthesis. Functionally, involved in the biosynthesis of osmoregulated periplasmic glucans (OPGs). This is Glucans biosynthesis glucosyltransferase H from Pseudomonas aeruginosa (strain LESB58).